The chain runs to 155 residues: Transcriptional repressor NrdR (155 aa).

A zinc finger spans residues 3–34 (CPFCGNIDTQVKDSRPAEDHVSIRRRRFCPAC). Residues 49–139 (LVVIKSSGKR…VYKNFQAADD (91 aa)) form the ATP-cone domain.

This sequence belongs to the NrdR family. Zn(2+) serves as cofactor.

Its function is as follows. Negatively regulates transcription of bacterial ribonucleotide reductase nrd genes and operons by binding to NrdR-boxes. In Cereibacter sphaeroides (strain ATCC 17029 / ATH 2.4.9) (Rhodobacter sphaeroides), this protein is Transcriptional repressor NrdR.